An 89-amino-acid polypeptide reads, in one-letter code: Co-chaperonin GroES (89 aa).

The protein belongs to the GroES chaperonin family. As to quaternary structure, heptamer of 7 subunits arranged in a ring. Interacts with the chaperonin GroEL.

It localises to the cytoplasm. In terms of biological role, together with the chaperonin GroEL, plays an essential role in assisting protein folding. The GroEL-GroES system forms a nano-cage that allows encapsulation of the non-native substrate proteins and provides a physical environment optimized to promote and accelerate protein folding. GroES binds to the apical surface of the GroEL ring, thereby capping the opening of the GroEL channel. This is Co-chaperonin GroES from Porphyromonas gingivalis (strain ATCC 33277 / DSM 20709 / CIP 103683 / JCM 12257 / NCTC 11834 / 2561).